A 297-amino-acid chain; its full sequence is Ribosome production factor 2 homolog (297 aa).

Residues 28 to 232 (KKALFCRGAK…VMRKKLADDA (205 aa)) form the Brix domain.

It belongs to the RPF2 family.

It localises to the nucleus. The protein resides in the nucleolus. In Caenorhabditis elegans, this protein is Ribosome production factor 2 homolog.